The following is a 457-amino-acid chain: MVQITEVNESKAGTANRTAAHTHIKGLGLDDTGAARQVEGGFVGQVEAREACGVIVDLIKAKKMSGRAILLAGGPSTGKTALALAISQELGPKVPFCPLVGSELYSVEVKKTETLMENFRRAIGLRIKETKEVYEGEVTELTPEDAENPLGGYGKTISHVIVGLKSAKGTKTLRLDPTIYDSIQKEKVSIGDVIYIEANTGAVKRVGRSDAYATEFDLEAEEYVPLPKGEVHKKKEIVQDVTLHDLDIANARPQGGQDVISMMGQLMKPKKTEITEKLRFEVNKVVAKYVDQGVAELIPGVLFIDEANMLDIEIFTYLNKALESDIAPIVVLASNRGMTTVRGTEDVISPHGIPADLIDRLLIVRTLPYNKDEIRLIIERRSAVENLALEDGALDILADMATHTSLRYALQLLSPAGILSSTAGRQKITIDDINEAKMLFIDAKRSTKILENSDRYM.

ATP is bound at residue 73-80 (GGPSTGKT).

The protein belongs to the RuvB family. May form heterododecamers with RVB2. Component of the SWR1 chromatin remodeling complex, the INO80 chromatin remodeling complex, and of the R2TP complex.

The protein localises to the nucleus. The enzyme catalyses ATP + H2O = ADP + phosphate + H(+). DNA helicase which participates in several chromatin remodeling complexes, including the SWR1 and the INO80 complexes. The SWR1 complex mediates the ATP-dependent exchange of histone H2A for the H2A variant HZT1 leading to transcriptional regulation of selected genes by chromatin remodeling. The INO80 complex remodels chromatin by shifting nucleosomes and is involved in DNA repair. Also involved in pre-rRNA processing. This chain is RuvB-like helicase 1 (RVB1), found in Candida glabrata (strain ATCC 2001 / BCRC 20586 / JCM 3761 / NBRC 0622 / NRRL Y-65 / CBS 138) (Yeast).